The sequence spans 101 residues: Guanyl-specific ribonuclease St (101 aa).

C4 and C54 are oxidised to a cystine. E61 serves as the catalytic Proton acceptor. H91 serves as the catalytic Proton donor.

Belongs to the ribonuclease N1/T1 family.

The catalysed reaction is [RNA] containing guanosine + H2O = an [RNA fragment]-3'-guanosine-3'-phosphate + a 5'-hydroxy-ribonucleotide-3'-[RNA fragment].. This chain is Guanyl-specific ribonuclease St, found in Saccharopolyspora erythraea (Streptomyces erythraeus).